Here is a 418-residue protein sequence, read N- to C-terminus: Putative competence-damage inducible protein (418 aa).

Belongs to the CinA family.

In Streptococcus gordonii (strain Challis / ATCC 35105 / BCRC 15272 / CH1 / DL1 / V288), this protein is Putative competence-damage inducible protein.